A 401-amino-acid chain; its full sequence is Phosphoglycerate kinase (401 aa).

Residues 23–25, Arg-38, 61–64, Arg-120, and Arg-153 contribute to the substrate site; these read DLN and HFGR. ATP is bound by residues Lys-203, Glu-325, and 355 to 358; that span reads GGDT.

It belongs to the phosphoglycerate kinase family. Monomer.

It localises to the cytoplasm. The enzyme catalyses (2R)-3-phosphoglycerate + ATP = (2R)-3-phospho-glyceroyl phosphate + ADP. It functions in the pathway carbohydrate degradation; glycolysis; pyruvate from D-glyceraldehyde 3-phosphate: step 2/5. The chain is Phosphoglycerate kinase from Rhizobium johnstonii (strain DSM 114642 / LMG 32736 / 3841) (Rhizobium leguminosarum bv. viciae).